The sequence spans 172 residues: uncharacterized protein (172 aa).

The 169-residue stretch at lysine 3–asparagine 171 folds into the PfpI endopeptidase domain.

It belongs to the peptidase C56 family.

This is an uncharacterized protein from Staphylococcus saprophyticus subsp. saprophyticus (strain ATCC 15305 / DSM 20229 / NCIMB 8711 / NCTC 7292 / S-41).